The chain runs to 408 residues: tRNA pseudouridine synthase D (408 aa).

The active-site Nucleophile is Asp82. The region spanning 157–367 is the TRUD domain; the sequence is GVPNRFGEQR…MEGERRPLRV (211 aa).

The protein belongs to the pseudouridine synthase TruD family.

The catalysed reaction is uridine(13) in tRNA = pseudouridine(13) in tRNA. In terms of biological role, responsible for synthesis of pseudouridine from uracil-13 in transfer RNAs. This chain is tRNA pseudouridine synthase D, found in Geobacter sulfurreducens (strain ATCC 51573 / DSM 12127 / PCA).